The sequence spans 680 residues: Enzymatic polyprotein (680 aa).

Positions 41–131 (LHCFVDTGAS…LYEPFIQFTD (91 aa)) are protease. The active site involves Asp46. The Reverse transcriptase domain occupies 273–453 (LKVIKPSKSP…KKINFLGLEI (181 aa)).

It belongs to the caulimoviridae enzymatic polyprotein family.

The enzyme catalyses DNA(n) + a 2'-deoxyribonucleoside 5'-triphosphate = DNA(n+1) + diphosphate. Functionally, encodes for at least two polypeptides: protease (PR) and reverse transcriptase (RT). The protease processes the polyprotein in cis. Reverse transcriptase is multifunctional enzyme that converts the viral RNA genome into dsDNA in viral cytoplasmic capsids. This enzyme displays a DNA polymerase activity that can copy either DNA or RNA templates, and a ribonuclease H (RNase H) activity that cleaves the RNA strand of RNA-DNA heteroduplexes in a partially processive 3'- to 5'-endonucleasic mode. Neo-synthesized pregenomic RNA (pgRNA) are encapsidated, and reverse-transcribed inside the nucleocapsid. Partial (+)DNA is synthesized from the (-)DNA template and generates the relaxed circular DNA (RC-DNA) genome. After budding and infection, the RC-DNA migrates in the nucleus, and is converted into a plasmid-like covalently closed circular DNA (cccDNA). The protein is Enzymatic polyprotein of Cauliflower mosaic virus (strain NY8153) (CaMV).